A 188-amino-acid chain; its full sequence is dCTP deaminase (188 aa).

DCTP is bound by residues 111-116 (KSTYAR), 135-137 (TLE), Gln156, Tyr170, and Gln180. Glu137 serves as the catalytic Proton donor/acceptor.

This sequence belongs to the dCTP deaminase family. In terms of assembly, homotrimer.

It catalyses the reaction dCTP + H2O + H(+) = dUTP + NH4(+). Its pathway is pyrimidine metabolism; dUMP biosynthesis; dUMP from dCTP (dUTP route): step 1/2. Catalyzes the deamination of dCTP to dUTP. The sequence is that of dCTP deaminase from Cupriavidus taiwanensis (strain DSM 17343 / BCRC 17206 / CCUG 44338 / CIP 107171 / LMG 19424 / R1) (Ralstonia taiwanensis (strain LMG 19424)).